Reading from the N-terminus, the 421-residue chain is MLLAIGVIVWCWGLLSRRPMLRRQGKQKGRCCVLFSDLEVFLLRPPTPSASPPAFTPMNELNAEGNATSSATESHSLANGHYQPVTGEEALDTRGPDDWTHSVVDPPRTLDCCSSSEDCSKEKLDERLSLNSCTDSGVRTPLCRICFQGPEQGELLSPCRCSGSVRCTHEPCLIKWISERGSWSCELCYYKYQVIAISTKNPLQWQAISLTVIEKVQIAAAVLGSLFLIASISWLVWSSLSPSAKWQRQDLLFQICYAMYGFMDLVCIALIVHEGPSVFRIFNRWQAVNQQWKVLNYDKVKDNEDHQKTGATFRTLSLPLTHRMGQSGPEGEPSTSTSSLMAAAAAAAAGTVTPTTNSVPPAAGATTEPQDSSEPSNGQPSLPDHHCAYNILHLLSHLRQQEPRGQTSNSNRELVMRVTTV.

Positions 1 to 16 are cleaved as a signal peptide; that stretch reads MLLAIGVIVWCWGLLS. A disordered region spans residues 60–79; sequence ELNAEGNATSSATESHSLAN. Polar residues predominate over residues 65–77; the sequence is GNATSSATESHSL. The segment at 135 to 195 adopts an RING-CH-type zinc-finger fold; it reads DSGVRTPLCR…ELCYYKYQVI (61 aa). Cys-143, Cys-146, Cys-159, Cys-161, His-169, Cys-172, Cys-185, and Cys-188 together coordinate Zn(2+). Helical transmembrane passes span 218–238 and 252–272; these read IAAA…LVWS and LFQI…ALIV. Disordered stretches follow at residues 319–385 and 401–421; these read PLTH…LPDH and QEPR…VTTV. Composition is skewed to polar residues over residues 367-380 and 403-412; these read TEPQ…NGQP and PRGQTSNSNR.

It localises to the golgi apparatus membrane. It catalyses the reaction S-ubiquitinyl-[E2 ubiquitin-conjugating enzyme]-L-cysteine + [acceptor protein]-L-lysine = [E2 ubiquitin-conjugating enzyme]-L-cysteine + N(6)-ubiquitinyl-[acceptor protein]-L-lysine.. It participates in protein modification; protein ubiquitination. In terms of biological role, E3 ubiquitin-protein ligase. E3 ubiquitin ligases accept ubiquitin from an E2 ubiquitin-conjugating enzyme in the form of a thioester and then directly transfer the ubiquitin to targeted substrates. This is E3 ubiquitin-protein ligase MARCHF4 (marchf4) from Danio rerio (Zebrafish).